A 404-amino-acid chain; its full sequence is Chorismate synthase (404 aa).

NADP(+) contacts are provided by R43 and R49. Residues 138–140 (RAS), 259–260 (QA), G303, 318–322 (KPIST), and R344 each bind FMN.

The protein belongs to the chorismate synthase family. Homotetramer. FMNH2 serves as cofactor.

It carries out the reaction 5-O-(1-carboxyvinyl)-3-phosphoshikimate = chorismate + phosphate. Its pathway is metabolic intermediate biosynthesis; chorismate biosynthesis; chorismate from D-erythrose 4-phosphate and phosphoenolpyruvate: step 7/7. Its function is as follows. Catalyzes the anti-1,4-elimination of the C-3 phosphate and the C-6 proR hydrogen from 5-enolpyruvylshikimate-3-phosphate (EPSP) to yield chorismate, which is the branch point compound that serves as the starting substrate for the three terminal pathways of aromatic amino acid biosynthesis. This reaction introduces a second double bond into the aromatic ring system. This chain is Chorismate synthase, found in Mycolicibacterium paratuberculosis (strain ATCC BAA-968 / K-10) (Mycobacterium paratuberculosis).